Consider the following 186-residue polypeptide: uncharacterized protein (186 aa).

The signal sequence occupies residues 1 to 21 (MKFFLGSALFLILTFINLVRA). Over 22–142 (EFEFITPAED…AFSVNPIDKK (121 aa)) the chain is Extracellular. N-linked (GlcNAc...) asparagine glycans are attached at residues N62, N75, N93, and N104. The helical transmembrane segment at 143–163 (LAIGLSVGLSCCILIVLFLHF) threads the bilayer. The Cytoplasmic portion of the chain corresponds to 164–186 (ATRRERRILKNEKELEMSSYRKH).

The protein localises to the membrane. This is an uncharacterized protein from Schizosaccharomyces pombe (strain 972 / ATCC 24843) (Fission yeast).